The primary structure comprises 300 residues: Ribosomal protein L11 methyltransferase (300 aa).

4 residues coordinate S-adenosyl-L-methionine: Thr-152, Gly-173, Asp-195, and Asn-234.

Belongs to the methyltransferase superfamily. PrmA family.

The protein localises to the cytoplasm. The catalysed reaction is L-lysyl-[protein] + 3 S-adenosyl-L-methionine = N(6),N(6),N(6)-trimethyl-L-lysyl-[protein] + 3 S-adenosyl-L-homocysteine + 3 H(+). Methylates ribosomal protein L11. The protein is Ribosomal protein L11 methyltransferase of Burkholderia pseudomallei (strain 1710b).